We begin with the raw amino-acid sequence, 270 residues long: Transcription factor bHLH113 (270 aa).

Positions 109–153 (CTVDKSTKSSTKKRTGTGNGQESDQNRKPGKKGKRNQEKSSVGIA) are disordered. The region spanning 144–193 (NQEKSSVGIAKVRKERLGERIAALQQLVSPYGKTDAASVLHEAMGYIKFL) is the bHLH domain.

Homodimer.

Its subcellular location is the nucleus. This is Transcription factor bHLH113 (BHLH113) from Arabidopsis thaliana (Mouse-ear cress).